The sequence spans 274 residues: 2,3,4,5-tetrahydropyridine-2,6-dicarboxylate N-succinyltransferase (274 aa).

Belongs to the transferase hexapeptide repeat family.

Its subcellular location is the cytoplasm. The enzyme catalyses (S)-2,3,4,5-tetrahydrodipicolinate + succinyl-CoA + H2O = (S)-2-succinylamino-6-oxoheptanedioate + CoA. It functions in the pathway amino-acid biosynthesis; L-lysine biosynthesis via DAP pathway; LL-2,6-diaminopimelate from (S)-tetrahydrodipicolinate (succinylase route): step 1/3. The sequence is that of 2,3,4,5-tetrahydropyridine-2,6-dicarboxylate N-succinyltransferase from Escherichia fergusonii (strain ATCC 35469 / DSM 13698 / CCUG 18766 / IAM 14443 / JCM 21226 / LMG 7866 / NBRC 102419 / NCTC 12128 / CDC 0568-73).